The primary structure comprises 230 residues: Cytidylate kinase (230 aa).

12 to 20 provides a ligand contact to ATP; it reads GPSGAGKGT.

The protein belongs to the cytidylate kinase family. Type 1 subfamily.

The protein localises to the cytoplasm. It carries out the reaction CMP + ATP = CDP + ADP. It catalyses the reaction dCMP + ATP = dCDP + ADP. This Shewanella baltica (strain OS223) protein is Cytidylate kinase.